A 261-amino-acid chain; its full sequence is 5'-nucleotidase SurE (261 aa).

The a divalent metal cation site is built by D18, D19, S50, and N102.

It belongs to the SurE nucleotidase family. It depends on a divalent metal cation as a cofactor.

The protein localises to the cytoplasm. The enzyme catalyses a ribonucleoside 5'-phosphate + H2O = a ribonucleoside + phosphate. In terms of biological role, nucleotidase that shows phosphatase activity on nucleoside 5'-monophosphates. This Rhodospirillum rubrum (strain ATCC 11170 / ATH 1.1.1 / DSM 467 / LMG 4362 / NCIMB 8255 / S1) protein is 5'-nucleotidase SurE.